Consider the following 544-residue polypeptide: Calcium-dependent protein kinase 6 (544 aa).

The interval 1 to 47 (MGNSCRGSFKDKIYEGNHSRPEENSKSTTTTVSSVHSPTTDQDFSKQ) is disordered. Residue Gly2 is the site of N-myristoyl glycine attachment. Basic and acidic residues predominate over residues 8 to 25 (SFKDKIYEGNHSRPEENS). A compositionally biased stretch (low complexity) spans 26–40 (KSTTTTVSSVHSPTT). Positions 85–343 (YTLSRKLGQG…AHEVLRHPWI (259 aa)) constitute a Protein kinase domain. ATP-binding positions include 91-99 (LGQGQFGTT) and Lys114. Asp209 serves as the catalytic Proton acceptor. Position 249 is a phosphoserine (Ser249). An autoinhibitory domain region spans residues 349–379 (APDRALDPAVLSRLKQFSAMNKLKKMALKVI). 4 consecutive EF-hand domains span residues 386–421 (EEIAGLRAMFEAMDTDNSGAITFDELKAGLRRYGST), 422–457 (LKDTEIRDLMEAADVDNSGTIDYSEFIAATIHLNKL), 458–493 (EREEHLVSAFQYFDKDGSGYITIDELQQSCIEHGMT), and 497–527 (LEDIIKEVDQDNDGRIDYEEFVAMMQKGNAG). 19 residues coordinate Ca(2+): Asp399, Asp401, Ser403, Glu410, Asp435, Asp437, Ser439, Thr441, Glu446, Asp471, Asp473, Ser475, Tyr477, Glu482, Asp505, Asp507, Asp509, Arg511, and Glu516.

It belongs to the protein kinase superfamily. Ser/Thr protein kinase family. CDPK subfamily. As to quaternary structure, interacts with SLAC1. Interacts with FD. Expressed in both guard cells and mesophyll cells. Expressed in the shoot apical meristem.

It is found in the cell membrane. The protein resides in the nucleus. It carries out the reaction L-seryl-[protein] + ATP = O-phospho-L-seryl-[protein] + ADP + H(+). The catalysed reaction is L-threonyl-[protein] + ATP = O-phospho-L-threonyl-[protein] + ADP + H(+). Its activity is regulated as follows. Activated by calcium. Autophosphorylation may play an important role in the regulation of the kinase activity. Functionally, may play a role in signal transduction pathways that involve calcium as a second messenger. Functions in abscisic acid (ABA) regulation of guard cell S-type anion- and Ca(2+)-permeable channels and stomatal closure. Phosphorylates FD. This is Calcium-dependent protein kinase 6 (CPK6) from Arabidopsis thaliana (Mouse-ear cress).